Consider the following 307-residue polypeptide: Mitochondrial brown fat uncoupling protein 1 (307 aa).

Over 1 to 10 (MVSQTTSEVQ) the chain is Mitochondrial intermembrane. A helical transmembrane segment spans residues 11 to 32 (PTMGVKIFSAGVAACLADIITF). Solcar repeat units follow at residues 11–102 (PTMG…VQEY), 111–201 (PTLV…MKGA), and 210–295 (DDVP…LKKE). At 33–73 (PLDTAKVRLQIQGEGQTSSTIRYKGVLGTITTLAKTEGLPK) the chain is on the mitochondrial matrix side. Fatty acid 16:0 is bound at residue K56. The helical transmembrane segment at 74-96 (LYSGLPAGIQRQISFASLRIGLY) threads the bilayer. Over 97 to 116 (DTVQEYFSSGKETPPTLVNR) the chain is Mitochondrial intermembrane. Residues 117 to 133 (ISAGLMTGGVAVFIGQP) traverse the membrane as a helical segment. Residues 134–178 (TEVVKVRLQAQSHLHGIKPRYTGTYNAYRIIATTESLSTLWKGTT) lie on the Mitochondrial matrix side of the membrane. A helical transmembrane segment spans residues 179-195 (PNLLRNVIINCTELVTY). Over 196-212 (DLMKGALVNNQILADDV) the chain is Mitochondrial intermembrane. The chain crosses the membrane as a helical span at residues 213-232 (PCHLLSALVAGFCTTFLASP). Topologically, residues 233-266 (ADVVKTRFINSLPGQYPSVPSCAMTMFTKEGPTA) are mitochondrial matrix. C254 is modified (cysteine sulfenic acid (-SOH)). Residues 267 to 289 (FFKGFVPSFLRLASWNVIMFVCF) traverse the membrane as a helical segment. K269 lines the fatty acid 16:0 pocket. At 290 to 307 (EQLKKELMKSRQTVDCTT) the chain is on the mitochondrial intermembrane side.

The protein belongs to the mitochondrial carrier (TC 2.A.29) family. As to quaternary structure, most probably functions as a monomer. Binds one purine nucleotide per monomer. However, has also been suggested to function as a homodimer or a homotetramer. Tightly associates with cardiolipin in the mitochondrion inner membrane; may stabilize and regulate its activity. In terms of processing, may undergo sulfenylation upon cold exposure. May increase the sensitivity of UCP1 thermogenic function to the activation by noradrenaline probably through structural effects. May undergo ubiquitin-mediated proteasomal degradation. In terms of tissue distribution, brown adipose tissue.

It is found in the mitochondrion inner membrane. It carries out the reaction H(+)(in) = H(+)(out). Its activity is regulated as follows. Has no constitutive proton transporter activity and has to be activated by long-chain fatty acids/LCFAs. Inhibited by purine nucleotides. Both purine nucleotides and LCFAs bind the cytosolic side of the transporter and directly compete to activate or inhibit it. Activated by noradrenaline and reactive oxygen species. Despite lacking canonical translational encoding for selenocysteine, a small pool of the protein has been observed to selectively incorporate selenocysteine at 'Cys-254'. Selenocysteine-modified protein is highly sensitive to redox modification and may constitute a pool of protein highly sensitive to activation by elevated levels of reactive oxygen species (ROS). Mitochondrial protein responsible for thermogenic respiration, a specialized capacity of brown adipose tissue and beige fat that participates in non-shivering adaptive thermogenesis to temperature and diet variations and more generally to the regulation of energy balance. Functions as a long-chain fatty acid/LCFA and proton symporter, simultaneously transporting one LCFA and one proton through the inner mitochondrial membrane. However, LCFAs remaining associated with the transporter via their hydrophobic tails, it results in an apparent transport of protons activated by LCFAs. Thereby, dissipates the mitochondrial proton gradient and converts the energy of substrate oxydation into heat instead of ATP. Regulates the production of reactive oxygen species/ROS by mitochondria. This Phodopus sungorus (Striped hairy-footed hamster) protein is Mitochondrial brown fat uncoupling protein 1.